Here is a 299-residue protein sequence, read N- to C-terminus: tRNA dimethylallyltransferase (299 aa).

G10–T17 is an ATP binding site. T12–T17 provides a ligand contact to substrate. Positions D35–Q38 are interaction with substrate tRNA.

It belongs to the IPP transferase family. Monomer. The cofactor is Mg(2+).

It catalyses the reaction adenosine(37) in tRNA + dimethylallyl diphosphate = N(6)-dimethylallyladenosine(37) in tRNA + diphosphate. Catalyzes the transfer of a dimethylallyl group onto the adenine at position 37 in tRNAs that read codons beginning with uridine, leading to the formation of N6-(dimethylallyl)adenosine (i(6)A). The chain is tRNA dimethylallyltransferase from Streptococcus thermophilus (strain CNRZ 1066).